The sequence spans 271 residues: Ribosomal RNA small subunit methyltransferase A (271 aa).

S-adenosyl-L-methionine is bound by residues His-11, Leu-13, Gly-38, Glu-58, Asp-86, and Asn-101.

This sequence belongs to the class I-like SAM-binding methyltransferase superfamily. rRNA adenine N(6)-methyltransferase family. RsmA subfamily.

The protein resides in the cytoplasm. It catalyses the reaction adenosine(1518)/adenosine(1519) in 16S rRNA + 4 S-adenosyl-L-methionine = N(6)-dimethyladenosine(1518)/N(6)-dimethyladenosine(1519) in 16S rRNA + 4 S-adenosyl-L-homocysteine + 4 H(+). Specifically dimethylates two adjacent adenosines (A1518 and A1519) in the loop of a conserved hairpin near the 3'-end of 16S rRNA in the 30S particle. May play a critical role in biogenesis of 30S subunits. This is Ribosomal RNA small subunit methyltransferase A from Helicobacter acinonychis (strain Sheeba).